The primary structure comprises 492 residues: Phenylalanine--tRNA ligase alpha subunit (492 aa).

L-phenylalanine-binding positions include Thr-335, 374–376, and Tyr-414; that span reads QLE. Glu-416 serves as a coordination point for Mg(2+). Phe-439 contacts L-phenylalanine.

It belongs to the class-II aminoacyl-tRNA synthetase family. Phe-tRNA synthetase alpha subunit type 2 subfamily. Tetramer of two alpha and two beta subunits. The cofactor is Mg(2+).

It is found in the cytoplasm. It carries out the reaction tRNA(Phe) + L-phenylalanine + ATP = L-phenylalanyl-tRNA(Phe) + AMP + diphosphate + H(+). The protein is Phenylalanine--tRNA ligase alpha subunit of Methanosarcina acetivorans (strain ATCC 35395 / DSM 2834 / JCM 12185 / C2A).